A 380-amino-acid polypeptide reads, in one-letter code: Succinyl-diaminopimelate desuccinylase (380 aa).

Residue histidine 69 participates in Zn(2+) binding. Residue aspartate 71 is part of the active site. Residue aspartate 102 coordinates Zn(2+). Residue glutamate 135 is the Proton acceptor of the active site. Positions 136, 164, and 353 each coordinate Zn(2+).

It belongs to the peptidase M20A family. DapE subfamily. In terms of assembly, homodimer. Zn(2+) is required as a cofactor. Co(2+) serves as cofactor.

The enzyme catalyses N-succinyl-(2S,6S)-2,6-diaminopimelate + H2O = (2S,6S)-2,6-diaminopimelate + succinate. It participates in amino-acid biosynthesis; L-lysine biosynthesis via DAP pathway; LL-2,6-diaminopimelate from (S)-tetrahydrodipicolinate (succinylase route): step 3/3. Catalyzes the hydrolysis of N-succinyl-L,L-diaminopimelic acid (SDAP), forming succinate and LL-2,6-diaminopimelate (DAP), an intermediate involved in the bacterial biosynthesis of lysine and meso-diaminopimelic acid, an essential component of bacterial cell walls. The polypeptide is Succinyl-diaminopimelate desuccinylase (Cereibacter sphaeroides (strain ATCC 17023 / DSM 158 / JCM 6121 / CCUG 31486 / LMG 2827 / NBRC 12203 / NCIMB 8253 / ATH 2.4.1.) (Rhodobacter sphaeroides)).